The sequence spans 491 residues: Aspartyl/glutamyl-tRNA(Asn/Gln) amidotransferase subunit B (491 aa).

Belongs to the GatB/GatE family. GatB subfamily. In terms of assembly, heterotrimer of A, B and C subunits.

It carries out the reaction L-glutamyl-tRNA(Gln) + L-glutamine + ATP + H2O = L-glutaminyl-tRNA(Gln) + L-glutamate + ADP + phosphate + H(+). The catalysed reaction is L-aspartyl-tRNA(Asn) + L-glutamine + ATP + H2O = L-asparaginyl-tRNA(Asn) + L-glutamate + ADP + phosphate + 2 H(+). Its function is as follows. Allows the formation of correctly charged Asn-tRNA(Asn) or Gln-tRNA(Gln) through the transamidation of misacylated Asp-tRNA(Asn) or Glu-tRNA(Gln) in organisms which lack either or both of asparaginyl-tRNA or glutaminyl-tRNA synthetases. The reaction takes place in the presence of glutamine and ATP through an activated phospho-Asp-tRNA(Asn) or phospho-Glu-tRNA(Gln). In Burkholderia multivorans (strain ATCC 17616 / 249), this protein is Aspartyl/glutamyl-tRNA(Asn/Gln) amidotransferase subunit B.